We begin with the raw amino-acid sequence, 307 residues long: Methionyl-tRNA formyltransferase (307 aa).

Residue 110-113 coordinates (6S)-5,6,7,8-tetrahydrofolate; it reads SLLP.

Belongs to the Fmt family.

It catalyses the reaction L-methionyl-tRNA(fMet) + (6R)-10-formyltetrahydrofolate = N-formyl-L-methionyl-tRNA(fMet) + (6S)-5,6,7,8-tetrahydrofolate + H(+). Attaches a formyl group to the free amino group of methionyl-tRNA(fMet). The formyl group appears to play a dual role in the initiator identity of N-formylmethionyl-tRNA by promoting its recognition by IF2 and preventing the misappropriation of this tRNA by the elongation apparatus. The polypeptide is Methionyl-tRNA formyltransferase (Rhodococcus erythropolis (strain PR4 / NBRC 100887)).